Reading from the N-terminus, the 400-residue chain is Sphingosine 1-phosphate receptor 5 (400 aa).

Topologically, residues 1–41 are extracellular; it reads MEPGLLRPAPVSEVIVLHYNYTGKLRGARYQPGAGLRADAA. The N-linked (GlcNAc...) asparagine glycan is linked to N20. A helical transmembrane segment spans residues 42–62; it reads VCLAVCAFIVLENLAVLLVLV. The Cytoplasmic segment spans residues 63-68; sequence RHPRFH. The helical transmembrane segment at 69–89 threads the bilayer; the sequence is APMFLLLGSLTLSDLLAGAAY. The Extracellular segment spans residues 90 to 111; that stretch reads ATNILLSGPLTLRLSPALWFAR. Residues 112-132 traverse the membrane as a helical segment; the sequence is EGGVFVALAASVLSLLAIALE. Residues 133-151 lie on the Cytoplasmic side of the membrane; sequence RHLTMARRGPAPAASRART. The chain crosses the membrane as a helical span at residues 152-172; it reads LAMAVAAWGASLLLGLLPALG. Topologically, residues 173 to 192 are extracellular; the sequence is WNCLGRLETCSTVLPLYAKA. A helical membrane pass occupies residues 193–213; that stretch reads YVLFCVLAFLGILAAICALYA. The Cytoplasmic portion of the chain corresponds to 214-253; sequence RIYCQVRANARRLRAGPGSRRATSSSRSRHTPRSLALLRT. A helical transmembrane segment spans residues 254–274; the sequence is LSVVLLAFVACWGPLFLLLLL. Over 275-288 the chain is Extracellular; that stretch reads DVACPARACPVLLQ. Residues 289-309 form a helical membrane-spanning segment; it reads ADPFLGLAMANSLLNPIIYTF. Topologically, residues 310–400 are cytoplasmic; sequence TNRDLRHALL…NRSLVPTATD (91 aa). Residue C324 is the site of S-palmitoyl cysteine attachment. The segment at 331 to 400 is disordered; the sequence is QDSSNSLQRS…NRSLVPTATD (70 aa). S340, S342, and S384 each carry phosphoserine. Positions 360–400 are enriched in polar residues; it reads DRSSSPSEHLSPQQDGVDTSCSTGSPGVATANRSLVPTATD.

Belongs to the G-protein coupled receptor 1 family. As to expression, expressed in spleen and brain. In the CNS expression is restricted to oligodendrocytes.

The protein resides in the cell membrane. Receptor for the lysosphingolipid sphingosine 1-phosphate (S1P). S1P is a bioactive lysophospholipid that elicits diverse physiological effect on most types of cells and tissues. Is coupled to both the G(i/0)alpha and G(12) subclass of heteromeric G-proteins. S1P activation on oligodendroglial cells modulates two distinct functional pathways mediating either process retraction or cell survival. S1P activation on O4-positive pre-oligodendrocytes induces process retraction via a Rho kinase/collapsin response-mediated protein signaling pathway. The S1P-induced survival of mature oligodendrocytes is mediated through a pertussis toxin-sensitive, Akt-dependent pathway. S1P activation on oligodendroglial cells modulates two distinct functional pathways mediating either process retraction or cell survival. These effects depend on the developmental stage of the cell. This Mus musculus (Mouse) protein is Sphingosine 1-phosphate receptor 5 (S1pr5).